The following is a 431-amino-acid chain: MSAPVEVVLSADSAGQLFNCAVYDPHTGSEFLSYRGGNTSSRSLTILNGEYILGAQLGKNYINVWEIQRKDQLQQKIVCPGIVTCLCASPDGLYVLAGIAEAIYLWEVSTGNLLAILSRHFQDLSCIKFTDDSSHFVSGGKDNLAFIWNLSSVVQLDSSRTPEPRHILSRHSLPITDIHCGLMGPQARVATASLDQTVKVWEISSGEMLLSVLFDVGIMSVTFDPCEYFLFCGGSDGNIFQVSLCSTSLSRDKTFQSDSEGNQVFKGHRNLVTCLSVSMDGTVLLSGSNDETVRMWDVQSKQCIWTINHRGPVTNAAIIPAPANMFLSDSHPAVPLPRFSRHLNPSEQGDGTGTGGMSLRLGANTQEPEGTYLEKAEELYSLMCAVTDKSVFGDGENTKVRVSELEEEVRTLKKINKDLYEFSTQLLTKPN.

WD repeat units lie at residues 78 to 118 (VCPG…AILS), 119 to 158 (RHFQDLSCIKFTDDSSHFVSGGKDNLAFIWNLSSVVQLDS), 170 to 211 (RHSL…MLLS), 213 to 252 (LFDVGIMSVTFDPCEYFLFCGGSDGNIFQVSLCSTSLSRD), and 267 to 306 (GHRNLVTCLSVSMDGTVLLSGSNDETVRMWDVQSKQCIWT). Residues 342–363 (HLNPSEQGDGTGTGGMSLRLGA) are disordered.

The protein belongs to the WD repeat IPI3/WDR18 family. In terms of assembly, component of the PELP1 complex, composed of at least PELP1, TEX10 and WDR18. The complex interacts with pre-60S ribosome particles.

It localises to the nucleus. The protein localises to the nucleolus. Its subcellular location is the nucleoplasm. The protein resides in the dynein axonemal particle. Functionally, involved in left-right determination through controlling the correct clustering and migration of dorsal forerunner cells (DFCs) and Kupffer's vesicle formation. Component of the PELP1 complex involved in the nucleolar steps of 28S rRNA maturation and the subsequent nucleoplasmic transit of the pre-60S ribosomal subunit. This Danio rerio (Zebrafish) protein is WD repeat-containing protein 18 (wdr18).